We begin with the raw amino-acid sequence, 1330 residues long: DNA-directed RNA polymerase subunit beta'' (1330 aa).

Zn(2+) contacts are provided by C214, C282, C289, and C292.

Belongs to the RNA polymerase beta' chain family. RpoC2 subfamily. In terms of assembly, in plastids the minimal PEP RNA polymerase catalytic core is composed of four subunits: alpha, beta, beta', and beta''. When a (nuclear-encoded) sigma factor is associated with the core the holoenzyme is formed, which can initiate transcription. Zn(2+) is required as a cofactor.

Its subcellular location is the plastid. The protein localises to the chloroplast. It carries out the reaction RNA(n) + a ribonucleoside 5'-triphosphate = RNA(n+1) + diphosphate. DNA-dependent RNA polymerase catalyzes the transcription of DNA into RNA using the four ribonucleoside triphosphates as substrates. In Physcomitrium patens (Spreading-leaved earth moss), this protein is DNA-directed RNA polymerase subunit beta''.